The primary structure comprises 273 residues: Formamidopyrimidine-DNA glycosylase (273 aa).

The active-site Schiff-base intermediate with DNA is the P2. The active-site Proton donor is the E3. Residue K58 is the Proton donor; for beta-elimination activity of the active site. DNA is bound by residues H92, R111, and K153. The FPG-type zinc-finger motif lies at M238–K272. R262 (proton donor; for delta-elimination activity) is an active-site residue.

It belongs to the FPG family. In terms of assembly, monomer. Requires Zn(2+) as cofactor.

The enzyme catalyses Hydrolysis of DNA containing ring-opened 7-methylguanine residues, releasing 2,6-diamino-4-hydroxy-5-(N-methyl)formamidopyrimidine.. It catalyses the reaction 2'-deoxyribonucleotide-(2'-deoxyribose 5'-phosphate)-2'-deoxyribonucleotide-DNA = a 3'-end 2'-deoxyribonucleotide-(2,3-dehydro-2,3-deoxyribose 5'-phosphate)-DNA + a 5'-end 5'-phospho-2'-deoxyribonucleoside-DNA + H(+). Functionally, involved in base excision repair of DNA damaged by oxidation or by mutagenic agents. Acts as a DNA glycosylase that recognizes and removes damaged bases. Has a preference for oxidized purines, such as 7,8-dihydro-8-oxoguanine (8-oxoG). Has AP (apurinic/apyrimidinic) lyase activity and introduces nicks in the DNA strand. Cleaves the DNA backbone by beta-delta elimination to generate a single-strand break at the site of the removed base with both 3'- and 5'-phosphates. The sequence is that of Formamidopyrimidine-DNA glycosylase from Rickettsia bellii (strain OSU 85-389).